We begin with the raw amino-acid sequence, 858 residues long: MKAIDSQDLEKHTPMMRQYLTLKAENPDVLLFYRMGDFYELFYDDAKKASELLGISLTARGKSGGDPIPMAGLPYHAVEGYLAKLVQLRVSVAICEQVGDPATSKGPVERKVVRLVTPGTLTDEALLQERQDNLLAAVYHGKKGFGYATLDISSGRFVIAELESCEALEAELQRTSPAELLYSEDFSEMSLISAFEGTRRRPEWEFDFDTSQKLLLDQFGTKDLQGFGLDGARLSLQAAGCLMQYVKDTQRTALPHINSIVRFNQGDSIILDAATRRNLELTMNLQGGHSNTLATVLDNTTTPMGSRMLQRWIHEPLRDRQRIEARQSALEEILENGLYDELHPLLKSLGDVERITARLALRNARPRDFSRLKHALAILPEIQQILARCQSAHLQSLARIISEFPEELALLDSAIVDNPPMLIRDGGVLKPGYNAELDQWRDLSQGATDYLAELEAREKEATGISTLKVGYNRVHGYYIEVSRRESDLVPLSYQRRQTLKNTERYIVAELKEHEEKVLSSQGKALALEKQLWDQLFDLILPQLHELQLFAQGAAELDVLANFAERADTLNYQRPVLTDIPGIQIESGRHPVIEQVSQTPFIANPVTLSPARKMLIVTGPNMGGKSTYMRQVALITLMAHIGCYVPAQSATIGPVDRIFTRIGAADDLASGRSTFMVEMTETANILHNATPKSLVLMDEIGRGTSTYDGLSLAWSAAEYLAQKIEAMTLFATHYFELTQLPELISNVANVHLDAIEHGDTIVFMHAVQDGAASKSYGLQVAALAGVPNPVILAAKHKLHHLESRDNHNTQQTDSSGVQQSMVFPDPIKSPLEEAMESIRPDELSPKQALDILYRLKDLS.

618–625 (GPNMGGKS) lines the ATP pocket.

This sequence belongs to the DNA mismatch repair MutS family.

This protein is involved in the repair of mismatches in DNA. It is possible that it carries out the mismatch recognition step. This protein has a weak ATPase activity. The sequence is that of DNA mismatch repair protein MutS from Shewanella woodyi (strain ATCC 51908 / MS32).